The chain runs to 1009 residues: Protein naked cuticle (1009 aa).

Polar residues-rich tracts occupy residues 68–83 (IITTPPGNASGSASNK) and 121–130 (LPQDMSSSGS). The disordered stretch occupies residues 68-166 (IITTPPGNAS…QQQTAAAATG (99 aa)). Over residues 152–166 (QQQQQQQQTAAAATG) the composition is skewed to low complexity. Residues 206-282 (EFTCDVSVEG…TVSPEGKSKS (77 aa)) form an interaction with dsh region. Residues 217 to 253 (KSSQPLQFSFTFYDLDGHHGKITKDDIVGIVYTIYES) form the EF-hand domain. 3 disordered regions span residues 328 to 433 (MSKQ…QQQL), 456 to 479 (AGNEATVPDCPSSHRQLHHQRQQD), and 515 to 580 (GNDS…QQQR). Basic residues predominate over residues 349-359 (RRQHRYRPRKL). Positions 370-387 (NSEKEKERERERERESHA) are enriched in basic and acidic residues. A compositionally biased stretch (basic residues) spans 403–414 (KSHHHHHHHGRY). Residues 515-525 (GNDSGNWQNRH) show a composition bias toward polar residues. 2 stretches are compositionally biased toward low complexity: residues 526–535 (LQQSLQQQPQ) and 570–580 (HQQLQQQQQQR). Positions 584 to 613 (ECWKSALNRNDLISIIRESMEKNRLCFQLN) are required for nuclear localization and inhibition of Wnt signaling. Disordered stretches follow at residues 619–662 (NVSP…SPLS), 773–799 (SAAHSPPPTPSNVATVQPIPKKSHNQK), 835–899 (LQQK…SAGS), and 955–982 (TESGGKQQQQQALEADEGQEQEVELDTS). Composition is skewed to low complexity over residues 624 to 638 (RQPAAQQQQQQQRQR) and 653 to 662 (SPAAPQSPLS). Residues 843-857 (RRHRHKQQQQQHHHQ) show a composition bias toward basic residues. The span at 858 to 875 (QQQQQQQQQNQQQQQQQQ) shows a compositional bias: low complexity. The segment covering 968–979 (EADEGQEQEVEL) has biased composition (acidic residues).

Belongs to the NKD family. As to quaternary structure, interacts with dsh.

It localises to the cell membrane. The protein localises to the cytoplasm. The protein resides in the nucleus. Cell autonomous antagonist of the canonical Wnt signaling pathway. May activate a second Wnt signaling pathway that controls planar cell polarity. Required for neuroblast specification. In Drosophila pseudoobscura pseudoobscura (Fruit fly), this protein is Protein naked cuticle.